The sequence spans 630 residues: Zinc finger protein MSN4 (630 aa).

An N-acetylmethionine modification is found at Met-1. A compositionally biased stretch (low complexity) spans 37-56 (TTNVSATSSNDNSANNSISS). 2 disordered regions span residues 37-77 (TTNV…ATNT) and 115-137 (FVNDGEKQSSNANGKKNGGDKIY). A Phosphoserine modification is found at Ser-178. The 9aaTAD signature appears at 237–245 (SILEDFVSS). At Ser-263 the chain carries Phosphoserine. Positions 292–303 (KNSSNSKPTQQI) are enriched in polar residues. Disordered stretches follow at residues 292 to 322 (KNSSNSKPTQQIIPEGTATTERRGSTISPTT) and 360 to 379 (SISSSLNRISHSSSTTRQQR). A phosphoserine mark is found at Ser-316 and Ser-319. Residues 360–373 (SISSSLNRISHSSS) show a composition bias toward low complexity. Thr-479 is subject to Phosphothreonine. The segment at 502-566 (TSQAHHAAQH…KSITTIDPNN (65 aa)) is disordered. Positions 504–515 (QAHHAAQHHQQQ) are enriched in low complexity. 2 stretches are compositionally biased toward polar residues: residues 516–525 (PTKQATVSPN) and 532–547 (SSVTLSPTISHNNNNG). Ser-558 is modified (phosphoserine). 2 C2H2-type zinc fingers span residues 573-596 (FKCKDCEKAFRRSEHLKRHIRSVH) and 602-624 (FACMFCEKKFSRSDNLSQHLKTH).

Its subcellular location is the cytoplasm. It is found in the nucleus. Positive transcriptional factor that acts as a component of the stress responsive system. Recognizes and binds to the stress response element (STRE) which is involved in the response to various forms of stress (heat, oxidative, osmotic, etc.). Involved in the regulation of the CTT1, DDR2, HSP12 genes. This Saccharomyces cerevisiae (strain ATCC 204508 / S288c) (Baker's yeast) protein is Zinc finger protein MSN4 (MSN4).